The chain runs to 314 residues: tRNA dimethylallyltransferase (314 aa).

Position 12 to 19 (12 to 19 (GPTGTGKS)) interacts with ATP. Residue 14–19 (TGTGKS) participates in substrate binding.

This sequence belongs to the IPP transferase family. As to quaternary structure, monomer. It depends on Mg(2+) as a cofactor.

It carries out the reaction adenosine(37) in tRNA + dimethylallyl diphosphate = N(6)-dimethylallyladenosine(37) in tRNA + diphosphate. Catalyzes the transfer of a dimethylallyl group onto the adenine at position 37 in tRNAs that read codons beginning with uridine, leading to the formation of N6-(dimethylallyl)adenosine (i(6)A). The chain is tRNA dimethylallyltransferase from Mycolicibacterium paratuberculosis (strain ATCC BAA-968 / K-10) (Mycobacterium paratuberculosis).